A 348-amino-acid chain; its full sequence is TEGPYFYIPMVNTTGIVRSPYEYPQYYLVNPAAYAMLGAYMFFLIIVGFPVNFMTLYVTLEHKKLRTPLNYILLNLAVADLFMVIGGFTTTIYTSMHGYFVLGRLGCNIEGFFATLGGMISLWSLAVLAIERWVVVCKPISNFRFGENHAIMGVSLTWAMALACTVPPLVGWSRYIPEGMQCSCGIDYYTRAEGFNNESFVLYMFFCHFTIPLTIIFFCYGRLLCAVKEAAAAQQESETTQRAEREVTRMVIIMVIGFLICWLPYASVAWFIFTHQGSEFGPLFMTIPAFFAKSSSIYNPMIYICMNKQFRHCMITTLFCGKNPFEGEEEGASSTKTEASSASSVSPA.

Residues 1–33 are Extracellular-facing; sequence TEGPYFYIPMVNTTGIVRSPYEYPQYYLVNPAA. N-linked (GlcNAc...) asparagine glycosylation is present at N12. A helical transmembrane segment spans residues 34-58; that stretch reads YAMLGAYMFFLIIVGFPVNFMTLYV. Residues 59 to 70 lie on the Cytoplasmic side of the membrane; that stretch reads TLEHKKLRTPLN. Residues 71-93 traverse the membrane as a helical segment; the sequence is YILLNLAVADLFMVIGGFTTTIY. The Extracellular segment spans residues 94–107; it reads TSMHGYFVLGRLGC. The cysteines at positions 107 and 184 are disulfide-linked. A helical transmembrane segment spans residues 108–130; sequence NIEGFFATLGGMISLWSLAVLAI. Positions 131–133 match the 'Ionic lock' involved in activated form stabilization motif; it reads ERW. The Cytoplasmic segment spans residues 131 to 149; the sequence is ERWVVVCKPISNFRFGENH. A helical membrane pass occupies residues 150-170; it reads AIMGVSLTWAMALACTVPPLV. Over 171–199 the chain is Extracellular; the sequence is GWSRYIPEGMQCSCGIDYYTRAEGFNNES. An N-linked (GlcNAc...) asparagine glycan is attached at N197. The helical transmembrane segment at 200 to 221 threads the bilayer; that stretch reads FVLYMFFCHFTIPLTIIFFCYG. Topologically, residues 222–249 are cytoplasmic; it reads RLLCAVKEAAAAQQESETTQRAEREVTR. Residues 250–271 form a helical membrane-spanning segment; the sequence is MVIIMVIGFLICWLPYASVAWF. The Extracellular portion of the chain corresponds to 272–283; the sequence is IFTHQGSEFGPL. A helical transmembrane segment spans residues 284–305; sequence FMTIPAFFAKSSSIYNPMIYIC. K293 is modified (N6-(retinylidene)lysine). Residues 306–348 lie on the Cytoplasmic side of the membrane; the sequence is MNKQFRHCMITTLFCGKNPFEGEEEGASSTKTEASSASSVSPA. Residue C320 is the site of S-palmitoyl cysteine attachment. The interval 327–348 is disordered; the sequence is GEEEGASSTKTEASSASSVSPA. Residues 332–348 are compositionally biased toward low complexity; that stretch reads ASSTKTEASSASSVSPA.

Belongs to the G-protein coupled receptor 1 family. Opsin subfamily. In terms of processing, phosphorylated on some or all of the serine and threonine residues present in the C-terminal region. Contains one covalently linked retinal chromophore.

It localises to the membrane. The protein resides in the cell projection. Its subcellular location is the cilium. The protein localises to the photoreceptor outer segment. Photoreceptor required for image-forming vision at low light intensity. While most salt water fish species use retinal as chromophore, most freshwater fish use 3-dehydroretinal, or a mixture of retinal and 3-dehydroretinal. Light-induced isomerization of 11-cis to all-trans retinal triggers a conformational change that activates signaling via G-proteins. Subsequent receptor phosphorylation mediates displacement of the bound G-protein alpha subunit by arrestin and terminates signaling. The protein is Rhodopsin (rho) of Sargocentron microstoma (Smallmouth squirrelfish).